Consider the following 239-residue polypeptide: RBPJ-interacting and tubulin-associated protein 1 (239 aa).

Residues leucine 12–proline 24 carry the Nuclear export signal motif. 2 disordered regions span residues alanine 62–lysine 97 and leucine 149–lysine 239. The Nuclear localization signal signature appears at glycine 93–serine 109. Positions tryptophan 129–alanine 158 are interaction with RBPJ/RBPSUH. Composition is skewed to polar residues over residues leucine 149 to lysine 159 and arginine 203 to glycine 221. Residues alanine 158 to lysine 239 are interaction with tubulin.

Belongs to the RITA family. In terms of assembly, interacts with rbpj/rbpsuh.

It localises to the cytoplasm. The protein localises to the nucleus. Functionally, tubulin-binding protein that acts as a negative regulator of Notch signaling pathway. Shuttles between the cytoplasm and the nucleus and mediates the nuclear export of rbpj/rbpsuh, thereby preventing the interaction between rbpj/rbpsuh and NICD product of Notch proteins (Notch intracellular domain), leading to down-regulate Notch-mediated transcription. May play a role in neurogenesis. This is RBPJ-interacting and tubulin-associated protein 1 (rita1) from Xenopus laevis (African clawed frog).